Consider the following 870-residue polypeptide: Histidine biosynthesis trifunctional protein (870 aa).

The phosphoribosyl-AMP cyclohydrolase stretch occupies residues 1–285; that stretch reads METTLPLPFL…KFVVKQKGRF (285 aa). The segment at 286 to 367 is phosphoribosyl-ATP pyrophosphohydrolase; it reads CHLDQSGCFG…FYFALTRAVA (82 aa). Residues 368-870 form a histidinol dehydrogenase region; sequence AGVTLADIER…IRLEHMSKSN (503 aa). The Zn(2+) site is built by Gln693 and His696. Residues Glu762 and His763 contribute to the active site. Zn(2+)-binding residues include Asp796 and His855.

It in the C-terminal section; belongs to the histidinol dehydrogenase family. It depends on Zn(2+) as a cofactor.

It catalyses the reaction 1-(5-phospho-beta-D-ribosyl)-5'-AMP + H2O = 1-(5-phospho-beta-D-ribosyl)-5-[(5-phospho-beta-D-ribosylamino)methylideneamino]imidazole-4-carboxamide. The catalysed reaction is 1-(5-phospho-beta-D-ribosyl)-ATP + H2O = 1-(5-phospho-beta-D-ribosyl)-5'-AMP + diphosphate + H(+). It carries out the reaction L-histidinol + 2 NAD(+) + H2O = L-histidine + 2 NADH + 3 H(+). Its pathway is amino-acid biosynthesis; L-histidine biosynthesis; L-histidine from 5-phospho-alpha-D-ribose 1-diphosphate: step 2/9. It participates in amino-acid biosynthesis; L-histidine biosynthesis; L-histidine from 5-phospho-alpha-D-ribose 1-diphosphate: step 3/9. It functions in the pathway amino-acid biosynthesis; L-histidine biosynthesis; L-histidine from 5-phospho-alpha-D-ribose 1-diphosphate: step 9/9. This is Histidine biosynthesis trifunctional protein (his-3) from Neurospora crassa (strain ATCC 24698 / 74-OR23-1A / CBS 708.71 / DSM 1257 / FGSC 987).